The chain runs to 287 residues: 3-methyl-2-oxobutanoate hydroxymethyltransferase (287 aa).

Residues Asp-67 and Asp-106 each contribute to the Mg(2+) site. 3-methyl-2-oxobutanoate is bound by residues 67–68 (DS), Asp-106, and Lys-136. Residue Glu-138 participates in Mg(2+) binding. The Proton acceptor role is filled by Glu-204.

The protein belongs to the PanB family. As to quaternary structure, homodecamer; pentamer of dimers. Mg(2+) is required as a cofactor.

It is found in the cytoplasm. The catalysed reaction is 3-methyl-2-oxobutanoate + (6R)-5,10-methylene-5,6,7,8-tetrahydrofolate + H2O = 2-dehydropantoate + (6S)-5,6,7,8-tetrahydrofolate. The protein operates within cofactor biosynthesis; (R)-pantothenate biosynthesis; (R)-pantoate from 3-methyl-2-oxobutanoate: step 1/2. Functionally, catalyzes the reversible reaction in which hydroxymethyl group from 5,10-methylenetetrahydrofolate is transferred onto alpha-ketoisovalerate to form ketopantoate. This Streptomyces avermitilis (strain ATCC 31267 / DSM 46492 / JCM 5070 / NBRC 14893 / NCIMB 12804 / NRRL 8165 / MA-4680) protein is 3-methyl-2-oxobutanoate hydroxymethyltransferase.